The following is a 429-amino-acid chain: Nocturnin (429 aa).

Residues 1–73 constitute a mitochondrion transit peptide; it reads MYQSPRRLCS…SMGNGTSRLY (73 aa). The interval 21 to 68 is disordered; sequence RRTLVPGPRRTLAPPVLGSRPKSPQLQAAAASGAARSRPRTVSSMGNG. Glu193 contacts Mg(2+). Substrate contacts are provided by residues Glu193, 217–219, Asn261, 284–287, and 322–324; these read KPW, HLKA, and DFN. Residues 341-351 form an interaction with PPARG region; it reads NLNSAYKLLSP. A substrate-binding site is contributed by His412.

This sequence belongs to the CCR4/nocturin family. Interacts with PPARG. Mg(2+) is required as a cofactor. As to expression, highly expressed in the differentiated adipocyte (at protein level). Ubiquitous.

It localises to the cytoplasm. It is found in the nucleus. Its subcellular location is the perinuclear region. The protein localises to the mitochondrion. It catalyses the reaction NADP(+) + H2O = phosphate + NAD(+). It carries out the reaction NADPH + H2O = phosphate + NADH. Functionally, phosphatase which catalyzes the conversion of NADP(+) to NAD(+) and of NADPH to NADH. Shows a small preference for NADPH over NADP(+). Represses translation and promotes degradation of target mRNA molecules. Plays an important role in post-transcriptional regulation of metabolic genes under circadian control. Exerts a rhythmic post-transcriptional control of genes necessary for metabolic functions including nutrient absorption, glucose/insulin sensitivity, lipid metabolism, adipogenesis, inflammation and osteogenesis. Plays an important role in favoring adipogenesis over osteoblastogenesis and acts as a key regulator of the adipogenesis/osteogenesis balance. Promotes adipogenesis by facilitating PPARG nuclear translocation which activates its transcriptional activity. Regulates circadian expression of NOS2 in the liver and negatively regulates the circadian expression of IGF1 in the bone. Critical for proper development of early embryos. The polypeptide is Nocturnin (Mus musculus (Mouse)).